A 724-amino-acid polypeptide reads, in one-letter code: Catalase-peroxidase (724 aa).

The segment at residues 98 to 226 (WHAAGTYRIA…LAAVMMGLIY (129 aa)) is a cross-link (tryptophyl-tyrosyl-methioninium (Trp-Tyr) (with M-252)). His-99 serves as the catalytic Proton acceptor. Residues 226–252 (YVNPEGVDGNPDPLKTAHDIRVTFERM) constitute a cross-link (tryptophyl-tyrosyl-methioninium (Tyr-Met) (with W-98)). His-267 provides a ligand contact to heme b.

This sequence belongs to the peroxidase family. Peroxidase/catalase subfamily. In terms of assembly, homodimer or homotetramer. Heme b serves as cofactor. In terms of processing, formation of the three residue Trp-Tyr-Met cross-link is important for the catalase, but not the peroxidase activity of the enzyme.

The enzyme catalyses H2O2 + AH2 = A + 2 H2O. It carries out the reaction 2 H2O2 = O2 + 2 H2O. Bifunctional enzyme with both catalase and broad-spectrum peroxidase activity. This chain is Catalase-peroxidase, found in Psychromonas ingrahamii (strain DSM 17664 / CCUG 51855 / 37).